The primary structure comprises 464 residues: GDNF family receptor alpha-2 (464 aa).

The signal sequence occupies residues 1 to 21 (MILANVFCLFFFLDETLRSLA). Cystine bridges form between Cys-40–Cys-93, Cys-95–Cys-105, Cys-161–Cys-222, Cys-168–Cys-174, Cys-185–Cys-200, Cys-195–Cys-241, Cys-224–Cys-229, Cys-251–Cys-323, Cys-258–Cys-264, Cys-275–Cys-293, and Cys-285–Cys-347. An N-linked (GlcNAc...) asparagine glycan is attached at Asn-52. An N-linked (GlcNAc...) asparagine glycan is attached at Asn-357. Residues 363-392 (VSPKGPSFQATQAPRVEKTPSLPDDLSDST) form a disordered region. A compositionally biased stretch (low complexity) spans 381–392 (TPSLPDDLSDST). An N-linked (GlcNAc...) asparagine glycan is attached at Asn-413. The GPI-anchor amidated serine moiety is linked to residue Ser-444. The propeptide at 445–464 (RARPSAALTVLSVLMLKLAL) is removed in mature form.

This sequence belongs to the GDNFR family. Interacts with NRTN ligand and RET: forms a 2:2:2 ternary complex composed of NRTN ligand, GFRA2 and RET receptor. Also forms a 4:4:4 tetrameric complex composed of 4 copies of NRTN ligand, GFRA2 and RET receptor, which prevents endocytosis of RET. Interacts with SORL1. Found in both brain and placenta.

The protein resides in the cell membrane. In terms of biological role, receptor for neurturin (NRTN), a growth factor that supports the survival of sympathetic neurons. NRTN-binding leads to autophosphorylation and activation of the RET receptor. Also able to mediate GDNF signaling through the RET tyrosine kinase receptor. Its function is as follows. Participates in NRTN-induced 'Ser-727' phosphorylation of STAT3. The sequence is that of GDNF family receptor alpha-2 (GFRA2) from Homo sapiens (Human).